Reading from the N-terminus, the 126-residue chain is MSKVNEIIEIVKGLTVLELAELVKAMEEEFGVSAAAPVAAVAAVPAAAAPVVEEEEQTEFDVILKNVGNEKIKVIKVVREITGLGLKEAKELVDGAPNPVKEKVNKEEAETIKKKLEEVGAGIEIK.

The protein belongs to the bacterial ribosomal protein bL12 family. In terms of assembly, homodimer. Part of the ribosomal stalk of the 50S ribosomal subunit. Forms a multimeric L10(L12)X complex, where L10 forms an elongated spine to which 2 to 4 L12 dimers bind in a sequential fashion. Binds GTP-bound translation factors.

Forms part of the ribosomal stalk which helps the ribosome interact with GTP-bound translation factors. Is thus essential for accurate translation. The sequence is that of Large ribosomal subunit protein bL12 from Desulforudis audaxviator (strain MP104C).